A 231-amino-acid chain; its full sequence is Orotidine 5'-phosphate decarboxylase (231 aa).

Substrate is bound by residues Asp11, Lys34, Asp61–Thr70, Thr117, Arg179, Gln188, Gly208, and Arg209. The active-site Proton donor is the Lys63.

This sequence belongs to the OMP decarboxylase family. Type 1 subfamily. As to quaternary structure, homodimer.

It catalyses the reaction orotidine 5'-phosphate + H(+) = UMP + CO2. It participates in pyrimidine metabolism; UMP biosynthesis via de novo pathway; UMP from orotate: step 2/2. Its function is as follows. Catalyzes the decarboxylation of orotidine 5'-monophosphate (OMP) to uridine 5'-monophosphate (UMP). This is Orotidine 5'-phosphate decarboxylase from Streptococcus thermophilus (strain ATCC BAA-491 / LMD-9).